Here is a 674-residue protein sequence, read N- to C-terminus: DNA ligase (674 aa).

NAD(+)-binding positions include 31–35 (DYEYD), 80–81 (SL), and Glu110. Lys112 serves as the catalytic N6-AMP-lysine intermediate. Positions 133, 167, 283, and 307 each coordinate NAD(+). Zn(2+)-binding residues include Cys401, Cys404, Cys419, and Cys424. A BRCT domain is found at 584 to 673 (KVEKIFEGMK…SKDEVKAVLE (90 aa)).

It belongs to the NAD-dependent DNA ligase family. LigA subfamily. Requires Mg(2+) as cofactor. Mn(2+) serves as cofactor.

The enzyme catalyses NAD(+) + (deoxyribonucleotide)n-3'-hydroxyl + 5'-phospho-(deoxyribonucleotide)m = (deoxyribonucleotide)n+m + AMP + beta-nicotinamide D-nucleotide.. DNA ligase that catalyzes the formation of phosphodiester linkages between 5'-phosphoryl and 3'-hydroxyl groups in double-stranded DNA using NAD as a coenzyme and as the energy source for the reaction. It is essential for DNA replication and repair of damaged DNA. This Clostridioides difficile (strain 630) (Peptoclostridium difficile) protein is DNA ligase.